Here is a 708-residue protein sequence, read N- to C-terminus: Protein MICRORCHIDIA 5 (708 aa).

Polar residues predominate over residues 1–11 (MAESGSTNPKS). The disordered stretch occupies residues 1 to 47 (MAESGSTNPKSPSVVPDSTLGGLKRDLRNYHDGDDSNNLSIKKSKTT). Over residues 23–34 (LKRDLRNYHDGD) the composition is skewed to basic and acidic residues. A coiled-coil region spans residues 590-665 (SVNLEAELQK…LENRQEGVST (76 aa)). The Nuclear localization signal signature appears at 672-679 (ARRDVTED).

The protein belongs to the MORC ATPase protein family. As to quaternary structure, homodimer and heterodimer. Component of an RNA-directed DNA methylation (RdDM) complex. The cofactor is Mg(2+). Requires Mn(2+) as cofactor.

It localises to the nucleus. Its function is as follows. Exhibits ATPase activity. Binds DNA/RNA in a non-specific manner and exhibits endonuclease activity. Probably involved in DNA repair. Involved in RNA-directed DNA methylation (RdDM) as a component of the RdDM machinery and required for gene silencing. May also be involved in the regulation of chromatin architecture to maintain gene silencing. This is Protein MICRORCHIDIA 5 from Arabidopsis thaliana (Mouse-ear cress).